Consider the following 172-residue polypeptide: 3-hydroxydecanoyl-[acyl-carrier-protein] dehydratase (172 aa).

His-71 is a catalytic residue.

Belongs to the thioester dehydratase family. FabA subfamily. Homodimer.

It is found in the cytoplasm. The catalysed reaction is a (3R)-hydroxyacyl-[ACP] = a (2E)-enoyl-[ACP] + H2O. It catalyses the reaction (3R)-hydroxydecanoyl-[ACP] = (2E)-decenoyl-[ACP] + H2O. The enzyme catalyses (2E)-decenoyl-[ACP] = (3Z)-decenoyl-[ACP]. Its pathway is lipid metabolism; fatty acid biosynthesis. Necessary for the introduction of cis unsaturation into fatty acids. Catalyzes the dehydration of (3R)-3-hydroxydecanoyl-ACP to E-(2)-decenoyl-ACP and then its isomerization to Z-(3)-decenoyl-ACP. Can catalyze the dehydratase reaction for beta-hydroxyacyl-ACPs with saturated chain lengths up to 16:0, being most active on intermediate chain length. The polypeptide is 3-hydroxydecanoyl-[acyl-carrier-protein] dehydratase (Aliivibrio fischeri (strain ATCC 700601 / ES114) (Vibrio fischeri)).